Here is a 464-residue protein sequence, read N- to C-terminus: Propanal dehydrogenase (CoA-propanoylating) (464 aa).

Residues 1–18 (MNTSELETLIRTILSEQL) form a targets protein to the BMC region.

The protein belongs to the EutE/PduP family. Interacts with BMC shell proteins PduA and PduJ, which target this protein to BMC. Interacts with PduQ, probably via the N-terminus of PduQ. Interacts with PduK, probably with its BMC-containing N-terminus.

The protein resides in the bacterial microcompartment. The catalysed reaction is propanal + NAD(+) + CoA = propanoyl-CoA + NADH + H(+). Its pathway is polyol metabolism; 1,2-propanediol degradation. In terms of biological role, a CoA-acylating aldehyde dehydrogenase required for optimal 1,2-propanediol (1,2-PD) degradation. Optimizes growth in the bacterial microcompartment (BMC) dedicated to 1,2-PD degradation by minimizing propionaldehyde toxicity. Directly targeted to the BMC. NAD(+) and NADH are regenerated internally within the Pdu BMC by the PduP and PduQ enzymes, which reduce NAD(+) and oxidize NADH respectively, although there must also be cofactor transport across the BMC. Its function is as follows. The 1,2-PD-specific bacterial microcompartment (BMC) concentrates low levels of 1,2-PD catabolic enzymes, concentrates volatile reaction intermediates thus enhancing pathway flux and keeps the level of toxic, mutagenic propionaldehyde low. The protein is Propanal dehydrogenase (CoA-propanoylating) of Salmonella typhimurium (strain LT2 / SGSC1412 / ATCC 700720).